The chain runs to 272 residues: 3-methyl-2-oxobutanoate hydroxymethyltransferase (272 aa).

Positions 51 and 90 each coordinate Mg(2+). Residues 51–52 (DS), Asp90, and Lys118 contribute to the 3-methyl-2-oxobutanoate site. Position 120 (Glu120) interacts with Mg(2+). Glu187 functions as the Proton acceptor in the catalytic mechanism.

Belongs to the PanB family. Homodecamer; pentamer of dimers. Requires Mg(2+) as cofactor.

Its subcellular location is the cytoplasm. It carries out the reaction 3-methyl-2-oxobutanoate + (6R)-5,10-methylene-5,6,7,8-tetrahydrofolate + H2O = 2-dehydropantoate + (6S)-5,6,7,8-tetrahydrofolate. It functions in the pathway cofactor biosynthesis; (R)-pantothenate biosynthesis; (R)-pantoate from 3-methyl-2-oxobutanoate: step 1/2. Its function is as follows. Catalyzes the reversible reaction in which hydroxymethyl group from 5,10-methylenetetrahydrofolate is transferred onto alpha-ketoisovalerate to form ketopantoate. The polypeptide is 3-methyl-2-oxobutanoate hydroxymethyltransferase (Xylella fastidiosa (strain 9a5c)).